Consider the following 264-residue polypeptide: 3-methyl-2-oxobutanoate hydroxymethyltransferase (264 aa).

Positions 45 and 84 each coordinate Mg(2+). Residues 45–46 (DS), D84, and K112 each bind 3-methyl-2-oxobutanoate. Residue E114 participates in Mg(2+) binding. E181 acts as the Proton acceptor in catalysis.

This sequence belongs to the PanB family. In terms of assembly, homodecamer; pentamer of dimers. Mg(2+) is required as a cofactor.

It localises to the cytoplasm. It carries out the reaction 3-methyl-2-oxobutanoate + (6R)-5,10-methylene-5,6,7,8-tetrahydrofolate + H2O = 2-dehydropantoate + (6S)-5,6,7,8-tetrahydrofolate. It participates in cofactor biosynthesis; (R)-pantothenate biosynthesis; (R)-pantoate from 3-methyl-2-oxobutanoate: step 1/2. Catalyzes the reversible reaction in which hydroxymethyl group from 5,10-methylenetetrahydrofolate is transferred onto alpha-ketoisovalerate to form ketopantoate. The polypeptide is 3-methyl-2-oxobutanoate hydroxymethyltransferase (Shewanella sediminis (strain HAW-EB3)).